The sequence spans 389 residues: Krueppel-like factor 17 (389 aa).

Disordered stretches follow at residues 1–48 and 239–279; these read MYGR…SGVH and LVSQ…GSSE. A compositionally biased stretch (polar residues) spans 26-38; it reads AQDNENSAPILNM. A compositionally biased stretch (basic and acidic residues) spans 264–278; sequence KNSRPQEGTGRRGSS. 3 C2H2-type zinc fingers span residues 283-307, 313-337, and 343-365; these read YCCNYENCGKAYTKRSHLVSHQRKH, YSCNWESCSWSFFRSDELRRHMRVH, and YKCDQCSREFMRSDHLKQHQKTH. The tract at residues 356-389 is disordered; that stretch reads DHLKQHQKTHRPGPSDPQANNNNGEQDSPPAAGP. Residues 372–381 show a composition bias toward polar residues; sequence PQANNNNGEQ.

Belongs to the Sp1 C2H2-type zinc-finger protein family.

It localises to the nucleus. Transcription repressor that binds to the promoter of target genes and prevents their expression. Acts as a negative regulator of epithelial-mesenchymal transition and metastasis in breast cancer. Specifically binds the 5'-CACCC-3' sequence in the promoter of ID1, a key metastasis regulator in breast cancer, and repress its expression. May be a germ cell-specific transcription factor that plays important roles in spermatid differentiation and oocyte development. This Homo sapiens (Human) protein is Krueppel-like factor 17 (KLF17).